The primary structure comprises 173 residues: Cytochrome c-type biogenesis protein CcmE (173 aa).

The Cytoplasmic segment spans residues 1-7 (MTRKSRR). The chain crosses the membrane as a helical; Signal-anchor for type II membrane protein span at residues 8–28 (LILIAACGAVLALALGLILSA). Residues 29-173 (MSGSIVFFRS…DATLGQRSER (145 aa)) lie on the Periplasmic side of the membrane. Heme-binding residues include H122 and Y126. The tract at residues 134–173 (ALKAQGRWQEGGGKDASKAAPKDAAKPETADATLGQRSER) is disordered. Positions 145-162 (GGKDASKAAPKDAAKPET) are enriched in basic and acidic residues.

This sequence belongs to the CcmE/CycJ family.

Its subcellular location is the cell inner membrane. Functionally, heme chaperone required for the biogenesis of c-type cytochromes. Transiently binds heme delivered by CcmC and transfers the heme to apo-cytochromes in a process facilitated by CcmF and CcmH. The protein is Cytochrome c-type biogenesis protein CcmE of Methylorubrum extorquens (strain CM4 / NCIMB 13688) (Methylobacterium extorquens).